Consider the following 313-residue polypeptide: tRNA dimethylallyltransferase (313 aa).

17–24 (GPTASGKT) is a binding site for ATP. Residue 19–24 (TASGKT) coordinates substrate. Interaction with substrate tRNA stretches follow at residues 42–45 (DSAL), 166–170 (QRLSR), 247–252 (RCVGYR), and 280–287 (KRQITWLR).

This sequence belongs to the IPP transferase family. In terms of assembly, monomer. It depends on Mg(2+) as a cofactor.

The enzyme catalyses adenosine(37) in tRNA + dimethylallyl diphosphate = N(6)-dimethylallyladenosine(37) in tRNA + diphosphate. Catalyzes the transfer of a dimethylallyl group onto the adenine at position 37 in tRNAs that read codons beginning with uridine, leading to the formation of N6-(dimethylallyl)adenosine (i(6)A). The chain is tRNA dimethylallyltransferase from Photorhabdus laumondii subsp. laumondii (strain DSM 15139 / CIP 105565 / TT01) (Photorhabdus luminescens subsp. laumondii).